The following is a 583-amino-acid chain: MAPPKHVIIIGAGAGGTATAARLAREGIKVTVVEKNNFGGGRCSLINHNGHRFDQGPSLYLMPKLFEEAFEALDEKIEDHVELLRCHNNYKVHFDDGDKIQLSSDLSRMKPEMERIEGPDGFLRFLDFMKESHTHYEGGVEMAIKQNFETIWKLIRLQYVPALFRLHIFDFVYSRAAKYFKTKKMRMAFTFQSMYMGMSPYDSPAVYNLLQYTEFAEGIWYPKGGFNTVIQKLENIATEKFGARFIYEAPVAKINTDDKGKKVTGVTLQSGEVIEADAVVCNADLVYAYHNLLPPCRWTTNTLAEKKLTSSSISFYWSLKRVVPELDVHNIFLAEAFKESFDEIFTDHKMPSELSFYVNLPSRIDPTAAPPGKDSMIVLVPIGHMKSKTNEAEDYTMIVKRARKMVLEVLERRLGLTNFIDLVEHEEVNDPSIWQKKFNLWRGSILGLSHDVLQVLWFRPSTQDSTGRYKNLFFVGASTHPGTGVPIVLAGSKLTSDQVCDHFGVKVRPSAITSSKRTYAPEDSKSFIWDIIWFLLIALFAATLVLFIAFPQYSEVNQTAASYINNLLPAAFRVPVANLSLTS.

A signal peptide spans 1–20 (MAPPKHVIIIGAGAGGTATA). A helical transmembrane segment spans residues 531-551 (IIWFLLIALFAATLVLFIAFP).

The protein belongs to the carotenoid/retinoid oxidoreductase family. The cofactor is NAD(+).

The protein localises to the membrane. The enzyme catalyses 15-cis-phytoene + 5 A = all-trans-3,4-didehydrolycopene + 5 AH2. Its pathway is carotenoid biosynthesis; lycopene biosynthesis. Its function is as follows. Phytoene desaturase involved in the carotenoid biosynthesis pathway. Converts phytoene into 3,4-didehydrolycopene via the intermediary of phytofluene, zeta-carotene, neurosporene and lycopene, by introducing up to five double bonds into phytoene. This is Phytoene desaturase (carB) from Phycomyces blakesleeanus (strain ATCC 8743b / DSM 1359 / FGSC 10004 / NBRC 33097 / NRRL 1555).